Consider the following 485-residue polypeptide: Glutamyl-tRNA(Gln) amidotransferase subunit A (485 aa).

Residues Lys79 and Ser154 each act as charge relay system in the active site. Ser178 serves as the catalytic Acyl-ester intermediate.

Belongs to the amidase family. GatA subfamily. In terms of assembly, heterotrimer of A, B and C subunits.

The catalysed reaction is L-glutamyl-tRNA(Gln) + L-glutamine + ATP + H2O = L-glutaminyl-tRNA(Gln) + L-glutamate + ADP + phosphate + H(+). Functionally, allows the formation of correctly charged Gln-tRNA(Gln) through the transamidation of misacylated Glu-tRNA(Gln) in organisms which lack glutaminyl-tRNA synthetase. The reaction takes place in the presence of glutamine and ATP through an activated gamma-phospho-Glu-tRNA(Gln). The chain is Glutamyl-tRNA(Gln) amidotransferase subunit A from Carboxydothermus hydrogenoformans (strain ATCC BAA-161 / DSM 6008 / Z-2901).